The primary structure comprises 141 residues: Hemoglobin subunit alpha (141 aa).

The region spanning Val1 to Arg141 is the Globin domain. Ser3 is subject to Phosphoserine. Residue Lys7 is modified to N6-succinyllysine. Thr8 is subject to Phosphothreonine. Lys11 carries the post-translational modification N6-succinyllysine. Lys16 carries the post-translational modification N6-acetyllysine; alternate. An N6-succinyllysine; alternate modification is found at Lys16. Tyr24 carries the post-translational modification Phosphotyrosine. Ser35 is modified (phosphoserine). Lys40 carries the post-translational modification N6-succinyllysine. Ser49 is subject to Phosphoserine. Residue His58 coordinates O2. His87 contributes to the heme b binding site. The residue at position 102 (Ser102) is a Phosphoserine. Residue Thr108 is modified to Phosphothreonine. Phosphoserine is present on residues Ser124 and Ser131. Phosphothreonine is present on residues Thr134 and Thr137. Position 138 is a phosphoserine (Ser138).

It belongs to the globin family. In terms of assembly, heterotetramer of two alpha chains and two beta chains. As to expression, red blood cells.

In terms of biological role, involved in oxygen transport from the lung to the various peripheral tissues. In Tamiasciurus hudsonicus (American red squirrel), this protein is Hemoglobin subunit alpha.